Here is a 309-residue protein sequence, read N- to C-terminus: Taste receptor type 2 member 8 (309 aa).

Over 1 to 7 (MFSPADN) the chain is Extracellular. The helical transmembrane segment at 8 to 28 (IFIILITGEFILGILGNGYIA) threads the bilayer. At 29–50 (LVNWIDWIKKKKISTVDYILTN) the chain is on the cytoplasmic side. Residues 51–71 (LVIARICLISVMVVNGIVIVL) traverse the membrane as a helical segment. Residues 72–82 (NPDVYTKNKQQ) lie on the Extracellular side of the membrane. Residues 83–103 (IVIFTFWTFANYLNMWITTCL) form a helical membrane-spanning segment. Residues 104–131 (NVFYFLKIASSSHPLFLWLKWKIDMVVH) are Cytoplasmic-facing. The chain crosses the membrane as a helical span at residues 132 to 152 (WILLGCFAISLLVSLIAAIVL). At 153–184 (SCDYRFHAIAKHKRNITEMFHVSKXPYFEPLT) the chain is on the extracellular side. N-linked (GlcNAc...) asparagine glycosylation is present at N167. The chain crosses the membrane as a helical span at residues 185-205 (LFNLFAIVPFIVSLISFFLLV). The Cytoplasmic segment spans residues 206-239 (RSLWRHTKQIKLYATGSRDPSTEVHVRAIKTMTS). The chain crosses the membrane as a helical span at residues 240-260 (FIFFFFLYFISSILMTFSYLM). The Extracellular segment spans residues 261-266 (TKYKLA). Residues 267–287 (VEFGEIAAILYPLGHSLILIV) form a helical membrane-spanning segment. Over 288-309 (LNNKLRQIFVRMLTCRKIACVI) the chain is Cytoplasmic.

Belongs to the G-protein coupled receptor T2R family.

It is found in the membrane. In terms of biological role, receptor that may play a role in the perception of bitterness and is gustducin-linked. May play a role in sensing the chemical composition of the gastrointestinal content. The activity of this receptor may stimulate alpha gustducin, mediate PLC-beta-2 activation and lead to the gating of TRPM5. In Pan paniscus (Pygmy chimpanzee), this protein is Taste receptor type 2 member 8 (TAS2R8).